Consider the following 343-residue polypeptide: 3-hydroxy-3-methylglutaryl-CoA lyase, cytoplasmic (343 aa).

G2 is lipidated: N-myristoyl glycine. Positions 48-315 (VKIVEVGPRD…NTGVDLYKVM (268 aa)) constitute a Pyruvate carboxyltransferase domain. A substrate-binding site is contributed by R56. A divalent metal cation-binding residues include D57, H248, and H250. Residue C281 is part of the active site. Residue N290 participates in a divalent metal cation binding.

The protein belongs to the HMG-CoA lyase family. It depends on a divalent metal cation as a cofactor.

The protein localises to the cytoplasm. It is found in the cytosol. The protein resides in the endoplasmic reticulum membrane. It catalyses the reaction (3S)-3-hydroxy-3-methylglutaryl-CoA = acetoacetate + acetyl-CoA. Its pathway is metabolic intermediate metabolism; (S)-3-hydroxy-3-methylglutaryl-CoA degradation; acetoacetate from (S)-3-hydroxy-3-methylglutaryl-CoA: step 1/1. In terms of biological role, non-mitochondrial 3-hydroxy-3-methylglutaryl-CoA lyase that catalyzes a cation-dependent cleavage of (S)-3-hydroxy-3-methylglutaryl-CoA into acetyl-CoA and acetoacetate, a key step in ketogenesis, the products of which support energy production in nonhepatic animal tissues. This is 3-hydroxy-3-methylglutaryl-CoA lyase, cytoplasmic (Hmgcll1) from Mus musculus (Mouse).